Reading from the N-terminus, the 667-residue chain is Interleukin-17 receptor E (667 aa).

An N-terminal signal peptide occupies residues 1 to 23 (MGSSRLAALLLPLLLIVIDLSDS). At 24–454 (AGIGFRHLPH…LLCPDVSYRH (431 aa)) the chain is on the extracellular side. The tract at residues 126-174 (LPRRHLSEKSHHISIPSPDISHKGLRSKRTQPSDPETWESLPRLDSQRH) is disordered. Residues N318, N347, and N364 are each glycosylated (N-linked (GlcNAc...) asparagine). The helical transmembrane segment at 455-475 (LGLLILALLALLTLLGVVLAL) threads the bilayer. The Cytoplasmic portion of the chain corresponds to 476–667 (TCRRPQSGPG…REAARLADLG (192 aa)). Residues 487 to 624 (ARPVLLLHAA…LLRDLPRLLR (138 aa)) form the SEFIR domain.

Forms heterodimers with IL17RA; the heterodimer binds IL17C. In terms of tissue distribution, predominantly expressed in mucosal tissues with high levels in keratinocytes and colon epithelial cells. Very low expression in dermal fibroblasts. Expressed in various tumor cell lines.

The protein resides in the cell membrane. The protein localises to the cytoplasm. It is found in the secreted. Its function is as follows. Specific functional receptor for IL17C. May be signaling through the NF-kappa-B and MAPK pathways. May require TRAF3IP2 /ACT1 for signaling. May be a crucial regulator in innate immunity to bacterial pathogens. Isoform 2 and isoform 4 may be either cytoplasmic inactive or dominant active forms. Isoform 3 and isoform 5 may act as soluble decoy receptors. The chain is Interleukin-17 receptor E (IL17RE) from Homo sapiens (Human).